The primary structure comprises 540 residues: Glucose-6-phosphate isomerase (540 aa).

The Proton donor role is filled by Glu-346. Residues His-377 and Lys-505 contribute to the active site.

The protein belongs to the GPI family.

Its subcellular location is the cytoplasm. The catalysed reaction is alpha-D-glucose 6-phosphate = beta-D-fructose 6-phosphate. Its pathway is carbohydrate biosynthesis; gluconeogenesis. It participates in carbohydrate degradation; glycolysis; D-glyceraldehyde 3-phosphate and glycerone phosphate from D-glucose: step 2/4. In terms of biological role, catalyzes the reversible isomerization of glucose-6-phosphate to fructose-6-phosphate. This is Glucose-6-phosphate isomerase from Francisella tularensis subsp. tularensis (strain WY96-3418).